The chain runs to 106 residues: Pyruvate decarboxylase 2 (106 aa).

N10 and G12 together coordinate Mg(2+).

This sequence belongs to the TPP enzyme family. Homotetramer. It depends on a metal cation as a cofactor. The cofactor is thiamine diphosphate.

It catalyses the reaction a 2-oxocarboxylate + H(+) = an aldehyde + CO2. The polypeptide is Pyruvate decarboxylase 2 (PDC2) (Zea mays (Maize)).